The sequence spans 227 residues: Urease subunit gamma/beta (227 aa).

The urease gamma stretch occupies residues 1–101 (MRLTPTERDR…LAVVTDPIGG (101 aa)). Positions 102-227 (GLGDQAPGAL…ACGYLGVEQR (126 aa)) are urease beta.

This sequence in the N-terminal section; belongs to the urease gamma subunit family. The protein in the C-terminal section; belongs to the urease beta subunit family. In terms of assembly, heterohexamer of 3 UreC (alpha) and 3 UreAB (gamma/beta) subunits.

It localises to the cytoplasm. It carries out the reaction urea + 2 H2O + H(+) = hydrogencarbonate + 2 NH4(+). It functions in the pathway nitrogen metabolism; urea degradation; CO(2) and NH(3) from urea (urease route): step 1/1. This chain is Urease subunit gamma/beta, found in Streptomyces avermitilis (strain ATCC 31267 / DSM 46492 / JCM 5070 / NBRC 14893 / NCIMB 12804 / NRRL 8165 / MA-4680).